Consider the following 535-residue polypeptide: MAKVQKLPLPWSECICPICQEILLEPVTLPCKHTLCNPCFQMTVEKASLCCPFCRKRVSTWARQHSRTRTLVNKELWEVIQKQYPKQCQRRASGQESDDLSDELTSCPVPVLCKPGEIRQEYEAEVSKIEAERTAQEEAERKASEDYIQKLLAEEEAEENLHAEASQREIEEQLKRDEELARLLSGDMDLSNASCTSVSPVTSKKVVSKSSKIVKSKQRVSGDIERFLSPKPRRALAAFGINESRNSDTSGSCILLDEDEDEIPDLSPQCPSTSLIQERDVELPMPYLPNCYKLESDAASQQDSCSERNDICNGTYSCSDSIDVEVSKTMEQQRATADSQEYRMETNAMSYSTPKRKCEECYLDIEEKAGSCQSVKKKKLSLSEDSPVLSVHAGKFIELEENLYERRKQEEHDRLFALQLQRELDKELKQVNRGKGSPDEYQLRPKRGLKLQECNDSPLPHNEQTPVQDKGGNTQSGYSPDENKKPSRKKSITSSQVRQSRAVTNTERSSEGMNVLKPSNKQPTILDLFQRSAGK.

Residues 16–55 (CPICQEILLEPVTLPCKHTLCNPCFQMTVEKASLCCPFCR) form an RING-type zinc finger. The short motif at 112-130 (LCKPGEIRQEYEAEVSKIE) is the LR motif 1 element. A UMI motif motif is present at residues 145–153 (EDYIQKLLA). 2 short sequence motifs (MIU motif) span residues 170–193 (IEEQ…LSNA) and 406–429 (RRKQ…KELK). Residues 429–443 (KQVNRGKGSPDEYQL) are compositionally biased toward basic and acidic residues. A disordered region spans residues 429–535 (KQVNRGKGSP…LDLFQRSAGK (107 aa)). The short motif at 433 to 444 (RGKGSPDEYQLR) is the LR motif 2 element. 2 stretches are compositionally biased toward polar residues: residues 462 to 478 (NEQT…QSGY) and 492 to 507 (ITSS…TNTE).

The protein belongs to the RNF168 family. In terms of assembly, monomer.

It localises to the nucleus. It carries out the reaction S-ubiquitinyl-[E2 ubiquitin-conjugating enzyme]-L-cysteine + [acceptor protein]-L-lysine = [E2 ubiquitin-conjugating enzyme]-L-cysteine + N(6)-ubiquitinyl-[acceptor protein]-L-lysine.. It participates in protein modification; protein ubiquitination. E3 ubiquitin-protein ligase required for accumulation of repair proteins to sites of DNA damage. Acts with ube2n/ubc13 to amplify the rnf8-dependent histone ubiquitination. Recruited to sites of DNA damage at double-strand breaks (DSBs) by binding to ubiquitinated histone H2A and ubiquitinates histone H2A and H2AX, leading to amplify the rnf8-dependent H2A ubiquitination and promoting the formation of 'Lys-63'-linked ubiquitin conjugates. This leads to concentrate ubiquitinated histones H2A and H2AX at DNA lesions to the threshold required for recruitment of tp53bp1 and brca1. Catalyzes monoubiquitination of 'Lys-13' and 'Lys-15' of nucleosomal histone H2A (H2AK13Ub and H2AK15Ub, respectively). The sequence is that of E3 ubiquitin-protein ligase rnf168 from Xenopus tropicalis (Western clawed frog).